Here is a 450-residue protein sequence, read N- to C-terminus: Glutathione reductase (450 aa).

Ser-14, Gly-15, Glu-34, Thr-41, Cys-42, Lys-50, and Ala-115 together coordinate FAD. Ser-14 lines the glutathione pocket. Cysteines 42 and 47 form a disulfide. NADP(+) is bound by residues Ala-175, Ile-178, Glu-181, Arg-198, Arg-204, and Gly-262. Asp-303 provides a ligand contact to FAD. Residue Asp-309 coordinates NADP(+). Thr-311 is a binding site for FAD. Arg-319 is a binding site for glutathione. An NADP(+)-binding site is contributed by Val-342. His-439 contributes to the FAD binding site. Residue His-439 is the Proton acceptor of the active site.

Belongs to the class-I pyridine nucleotide-disulfide oxidoreductase family. Homodimer. It depends on FAD as a cofactor.

Its subcellular location is the cytoplasm. The enzyme catalyses 2 glutathione + NADP(+) = glutathione disulfide + NADPH + H(+). Its function is as follows. Catalyzes the reduction of glutathione disulfide (GSSG) to reduced glutathione (GSH). Constitutes the major mechanism to maintain a high GSH:GSSG ratio in the cytosol. This is Glutathione reductase (gor) from Streptococcus thermophilus.